The chain runs to 1076 residues: Histone deacetylase 4 (1076 aa).

Residues 66–169 (REQQLQQELL…GKESAVASTE (104 aa)) adopt a coiled-coil conformation. The interaction with MEF2A stretch occupies residues 117-312 (MLAMKHQQEL…NSSSGNVSTE (196 aa)). The span at 132–162 (KLERHRQEQELEKQHREQKLQQLKNKEKGKE) shows a compositional bias: basic and acidic residues. Disordered regions lie at residues 132–166 (KLER…SAVA), 205–225 (TQHS…ASYN), and 239–323 (PLRK…PSAP). Positions 205-224 (TQHSSLDQSSPPQSGVSASY) are enriched in polar residues. A Phosphoserine modification is found at serine 209. Serine 245 bears the Phosphoserine; by CaMK4 and SIK1 mark. Basic and acidic residues predominate over residues 258-273 (KVAERRSSPLLRRKDG). The segment covering 289-310 (SACSSAPGSGPSSPNSSSGNVS) has biased composition (low complexity). The PxLPxI/L motif; mediates interaction with ANKRA2 and 14-3-3 proteins motif lies at 348-353 (PSLPNI). Serine 349 is modified (phosphoserine). Serine 465 is subject to Phosphoserine; by CaMK4 and SIK1. 3 disordered regions span residues 506–529 (ISKP…ELRE), 541–580 (RLPG…QRPA), and 622–645 (RPLS…EPPT). Residues 514–529 (RQPESHPEETEEELRE) are compositionally biased toward basic and acidic residues. Residue lysine 556 forms a Glycyl lysine isopeptide (Lys-Gly) (interchain with G-Cter in SUMO) linkage. The residue at position 562 (serine 562) is a Phosphoserine. Residues 626–638 (RAQSSPASATFPM) are compositionally biased toward polar residues. At serine 629 the chain carries Phosphoserine; by CaMK4. Serine 630 carries the post-translational modification Phosphoserine. The histone deacetylase stretch occupies residues 652 to 1076 (GLVYDTLMLK…EEPMEEEPPL (425 aa)). The Zn(2+) site is built by cysteine 664, cysteine 666, histidine 672, and cysteine 743. Histidine 795 is an active-site residue. The Nuclear export signal signature appears at 1043–1076 (EEAETVTAMASLSVGVKPAEKRSEEEPMEEEPPL).

The protein belongs to the histone deacetylase family. HD type 2 subfamily. As to quaternary structure, homodimer. Homodimerization via its N-terminal domain. Interacts with HDAC7. Interacts with MEF2A, MEF2C, MEF2D, MORC2 and NR2C1. Interacts with a 14-3-3 chaperone proteins in a phosphorylation dependent manner. Interacts with 14-3-3 protein YWHAB. Interacts with BTBD14B. Interacts with KDM5B. Interacts (via PxLPxI/L motif) with ANKRA2 (via ankyrin repeats). Interacts with CUL7 (as part of the 3M complex); negatively regulated by ANKRA2. Interacts with EP300 in the presence of TFAP2C. Interacts with AHRR. Interacts with MYOCD. Interacts with HSPA1A and HSPA1B leading to their deacetylation at 'Lys-77'. Interacts with ZBTB7B; the interaction allows the recruitment of HDAC4 on CD8 loci for deacetylation and possible inhibition of CD8 genes expression. Interacts with DHX36. Interacts with SIK3; this interaction leads to HDAC4 retention in the cytoplasm. Interacts with ZNF638. Post-translationally, phosphorylated by CaMK4 at Ser-245, Ser-465 and Ser-629. Phosphorylation at other residues by CaMK2D is required for the interaction with 14-3-3. Phosphorylation at Ser-349, within the PxLPxI/L motif, impairs the binding of ANKRA2 but generates a high-affinity docking site for 14-3-3. In terms of processing, sumoylation on Lys-556 is promoted by the E3 SUMO-protein ligase RANBP2, and prevented by phosphorylation by CaMK4.

The protein localises to the nucleus. It localises to the cytoplasm. The catalysed reaction is N(6)-acetyl-L-lysyl-[histone] + H2O = L-lysyl-[histone] + acetate. Its function is as follows. Responsible for the deacetylation of lysine residues on the N-terminal part of the core histones (H2A, H2B, H3 and H4). Histone deacetylation gives a tag for epigenetic repression and plays an important role in transcriptional regulation, cell cycle progression and developmental events. Histone deacetylases act via the formation of large multiprotein complexes. Involved in muscle maturation via its interaction with the myocyte enhancer factors such as MEF2A, MEF2C and MEF2D. Deacetylates HSPA1A and HSPA1A at 'Lys-77' leading to their preferential binding to co-chaperone STUB1. The sequence is that of Histone deacetylase 4 (Hdac4) from Mus musculus (Mouse).